Consider the following 966-residue polypeptide: Glycine dehydrogenase (decarboxylating) (966 aa).

The residue at position 713 (Lys713) is an N6-(pyridoxal phosphate)lysine.

The protein belongs to the GcvP family. The glycine cleavage system is composed of four proteins: P, T, L and H. Pyridoxal 5'-phosphate serves as cofactor.

It catalyses the reaction N(6)-[(R)-lipoyl]-L-lysyl-[glycine-cleavage complex H protein] + glycine + H(+) = N(6)-[(R)-S(8)-aminomethyldihydrolipoyl]-L-lysyl-[glycine-cleavage complex H protein] + CO2. The glycine cleavage system catalyzes the degradation of glycine. The P protein binds the alpha-amino group of glycine through its pyridoxal phosphate cofactor; CO(2) is released and the remaining methylamine moiety is then transferred to the lipoamide cofactor of the H protein. The chain is Glycine dehydrogenase (decarboxylating) from Psychromonas ingrahamii (strain DSM 17664 / CCUG 51855 / 37).